Here is a 611-residue protein sequence, read N- to C-terminus: Threonine--tRNA ligase (611 aa).

Residues methionine 1–leucine 25 are disordered. The span at valine 9 to valine 24 shows a compositional bias: low complexity. The catalytic stretch occupies residues aspartate 209–proline 502. Cysteine 302, histidine 353, and histidine 479 together coordinate Zn(2+).

The protein belongs to the class-II aminoacyl-tRNA synthetase family. As to quaternary structure, homodimer. Zn(2+) is required as a cofactor.

The protein localises to the cytoplasm. It carries out the reaction tRNA(Thr) + L-threonine + ATP = L-threonyl-tRNA(Thr) + AMP + diphosphate + H(+). In terms of biological role, catalyzes the attachment of threonine to tRNA(Thr) in a two-step reaction: L-threonine is first activated by ATP to form Thr-AMP and then transferred to the acceptor end of tRNA(Thr). Also edits incorrectly charged L-seryl-tRNA(Thr). In Parasynechococcus marenigrum (strain WH8102), this protein is Threonine--tRNA ligase.